Consider the following 221-residue polypeptide: GTP-binding nuclear protein Ran-1 (221 aa).

In terms of domain architecture, Small GTPase Ran-type spans 10 to 174 (DYPSFKLVIV…LYLARKLAGD (165 aa)). Residue 21 to 28 (DGGTGKTT) coordinates GTP. A switch-I region spans residues 40 to 48 (KKYEPTIGV). GTP contacts are provided by residues glycine 71, 125–128 (NKVD), and 153–155 (SAK). The segment at 71 to 87 (GQEKFGGLRDGYYIHGQ) is switch-II.

It belongs to the small GTPase superfamily. Ran family. As to quaternary structure, found in a nuclear export complex with RanGTP, exportin and pre-miRNA.

It localises to the nucleus. GTP-binding protein involved in nucleocytoplasmic transport. Required for the import of protein into the nucleus and also for RNA export. Involved in chromatin condensation and control of cell cycle. This chain is GTP-binding nuclear protein Ran-1 (RAN1), found in Oryza sativa subsp. indica (Rice).